The sequence spans 906 residues: Eukaryotic translation initiation factor 4 gamma 2 (906 aa).

An N-acetylmethionine modification is found at methionine 1. The disordered stretch occupies residues 1–71 (MESAIAEGGA…SAANNSANEK (71 aa)). Serine 11 bears the Phosphoserine mark. Positions 78 to 308 (FRKVRGILNK…QDTVELREHH (231 aa)) constitute an MIF4G domain. Threonine 89 carries the phosphothreonine modification. Arginine 359 is subject to Omega-N-methylarginine. Serine 394 bears the Phosphoserine mark. Lysine 430 carries the N6-methyllysine modification. The residue at position 442 (serine 442) is a Phosphoserine. Residues 497–540 (PPSAQPPRTQTPPLGQTPQLGLKTNPPLIQEKPAKTSKKPPPSK) form a disordered region. Residues 502–515 (PPRTQTPPLGQTPQ) are compositionally biased toward polar residues. Arginine 504 bears the Omega-N-methylarginine mark. A phosphothreonine mark is found at threonine 507 and threonine 513. One can recognise an MI domain in the interval 542–665 (ELLKLTEAVV…SISELAQPLE (124 aa)). Residue lysine 574 forms a Glycyl lysine isopeptide (Lys-Gly) (interchain with G-Cter in SUMO2) linkage. Positions 719–903 (EGKGLSFLFP…ETAEEEESEE (185 aa)) constitute a W2 domain. Serine 901 is subject to Phosphoserine.

It belongs to the eukaryotic initiation factor 4G family. Interacts with the serine/threonine protein kinases MKNK1 and MKNK2. Binds EIF4A and EIF3. Interacts with MIF4GD. Interacts with DAZAP2. In terms of processing, phosphorylation; hyperphosphorylated during mitosis. Ubiquitously expressed in all tissues examined.

Functionally, appears to play a role in the switch from cap-dependent to IRES-mediated translation during mitosis, apoptosis and viral infection. Cleaved by some caspases and viral proteases. The protein is Eukaryotic translation initiation factor 4 gamma 2 of Mus musculus (Mouse).